The primary structure comprises 400 residues: tRNA pseudouridine synthase Pus10 (400 aa).

The THUMP domain maps to 77–194 (QVYVELFGSP…DGSVSVQPRR (118 aa)). Residue Y301 participates in substrate binding.

It belongs to the pseudouridine synthase Pus10 family.

The enzyme catalyses uridine(54) in tRNA = pseudouridine(54) in tRNA. It carries out the reaction uridine(55) in tRNA = pseudouridine(55) in tRNA. In terms of biological role, responsible for synthesis of pseudouridine from uracil-54 and uracil-55 in the psi GC loop of transfer RNAs. This is tRNA pseudouridine synthase Pus10 from Acidilobus saccharovorans (strain DSM 16705 / JCM 18335 / VKM B-2471 / 345-15).